The chain runs to 279 residues: Aquaporin A (279 aa).

The Cytoplasmic segment spans residues 1–40 (MVKVVPLRFITYDPLKDPSKMIYRRPISKPVKAFKGFFSE). A helical transmembrane segment spans residues 41–61 (FLGTLYLVYFCGGSVCAAFAV). Residues 62–69 (AGDSAARA) are Extracellular-facing. Residues 70 to 90 (LLGGLIQGMALAALIWAVSGV) traverse the membrane as a helical segment. Residues 91–114 (SGCNLNPAVTLANLLSGRVGLIDS) lie on the Cytoplasmic side of the membrane. Positions 96 to 98 (NPA) match the NPA 1 motif. Residues 115-135 (LYYVAAQILGCIAGAGILYGC) traverse the membrane as a helical segment. Residues 136–158 (LPNMYRIDLGVPHLAPGMNTGQA) are Extracellular-facing. A helical membrane pass occupies residues 159-179 (FLMEMMLTSILCLCVLGTSVF). The Cytoplasmic segment spans residues 180-188 (NVWDRRLNR). A helical transmembrane segment spans residues 189–209 (IAPFAIGLALFIGVAIGFNFS). Residues 210-227 (GGALNPVRVLGPSIISGV) lie on the Extracellular side of the membrane. Residues 214–216 (NPV) carry the NPA 2 motif. The helical transmembrane segment at 228-248 (WSHHWVYWLGPIVGAILAAFI) threads the bilayer. Residues 249-279 (YRCLLQERFDVIERPGYIAPLIDPSTAVSSY) are Cytoplasmic-facing.

It belongs to the MIP/aquaporin (TC 1.A.8) family.

The protein resides in the cell membrane. Functionally, may form a water-specific channel. Required for prolonged spore survival on fruiting bodies. This chain is Aquaporin A (aqpA), found in Dictyostelium discoideum (Social amoeba).